Reading from the N-terminus, the 330-residue chain is Cathepsin S (330 aa).

A signal peptide spans 1 to 17 (MKQLVCVLFVCSSAVTQ). Residues 18–114 (LHKDPTLDHH…ITYKSNPNQM (97 aa)) constitute a propeptide, activation peptide. Asn104 is a glycosylation site (N-linked (GlcNAc...) asparagine). Cystine bridges form between Cys126–Cys223, Cys136–Cys179, Cys170–Cys212, and Cys271–Cys319. The active site involves Cys139. Residues His277 and Asn297 contribute to the active site.

It belongs to the peptidase C1 family.

It localises to the lysosome. The protein localises to the secreted. It is found in the cytoplasmic vesicle. The protein resides in the phagosome. It carries out the reaction Similar to cathepsin L, but with much less activity on Z-Phe-Arg-|-NHMec, and more activity on the Z-Val-Val-Arg-|-Xaa compound.. Its function is as follows. Thiol protease. Key protease responsible for the removal of the invariant chain from MHC class II molecules and MHC class II antigen presentation. The bond-specificity of this proteinase is in part similar to the specificities of cathepsin L. The polypeptide is Cathepsin S (CTSS) (Saimiri boliviensis boliviensis (Bolivian squirrel monkey)).